The chain runs to 213 residues: Octanoyltransferase (213 aa).

The BPL/LPL catalytic domain occupies 32–207 (ESTLDEIWLV…NILALLNNPD (176 aa)). Residues 71–78 (RGGQVTYH), 138–140 (SLG), and 151–153 (GLA) each bind substrate. The active-site Acyl-thioester intermediate is the C169.

This sequence belongs to the LipB family.

It is found in the cytoplasm. It catalyses the reaction octanoyl-[ACP] + L-lysyl-[protein] = N(6)-octanoyl-L-lysyl-[protein] + holo-[ACP] + H(+). It functions in the pathway protein modification; protein lipoylation via endogenous pathway; protein N(6)-(lipoyl)lysine from octanoyl-[acyl-carrier-protein]: step 1/2. Catalyzes the transfer of endogenously produced octanoic acid from octanoyl-acyl-carrier-protein onto the lipoyl domains of lipoate-dependent enzymes. Lipoyl-ACP can also act as a substrate although octanoyl-ACP is likely to be the physiological substrate. The chain is Octanoyltransferase from Escherichia coli (strain SMS-3-5 / SECEC).